We begin with the raw amino-acid sequence, 102 residues long: MIPGEIKTDSGDRELNVGRPRIKIKVANAGDRPIQVGSHYHFYEVNNALKFDREATKGYRLDITSSTAIRFEPGQEREVTLIPYQGSRTVIGFQGKVQGVLS.

This sequence belongs to the urease beta subunit family. In terms of assembly, heterotrimer of UreA (gamma), UreB (beta) and UreC (alpha) subunits. Three heterotrimers associate to form the active enzyme.

Its subcellular location is the cytoplasm. It carries out the reaction urea + 2 H2O + H(+) = hydrogencarbonate + 2 NH4(+). Its pathway is nitrogen metabolism; urea degradation; CO(2) and NH(3) from urea (urease route): step 1/1. The sequence is that of Urease subunit beta from Alteromonas mediterranea (strain DSM 17117 / CIP 110805 / LMG 28347 / Deep ecotype).